Consider the following 149-residue polypeptide: Myoglobin (149 aa).

Ala2 is subject to N-acetylalanine. One can recognise a Globin domain in the interval 2–143 (ADWDKVNSVW…ICSDIEKEYK (142 aa)). Position 89 (His89) interacts with heme b.

Belongs to the globin family. Monomeric.

It localises to the cytoplasm. The protein localises to the sarcoplasm. The enzyme catalyses Fe(III)-heme b-[protein] + nitric oxide + H2O = Fe(II)-heme b-[protein] + nitrite + 2 H(+). It carries out the reaction H2O2 + AH2 = A + 2 H2O. Its function is as follows. Monomeric heme protein which primary function is to store oxygen and facilitate its diffusion within muscle tissues. Reversibly binds oxygen through a pentacoordinated heme iron and enables its timely and efficient release as needed during periods of heightened demand. Depending on the oxidative conditions of tissues and cells, and in addition to its ability to bind oxygen, it also has a nitrite reductase activity whereby it regulates the production of bioactive nitric oxide. Under stress conditions, like hypoxia and anoxia, it also protects cells against reactive oxygen species thanks to its pseudoperoxidase activity. In Galeorhinus galeus (Tope shark), this protein is Myoglobin (mb).